A 2554-amino-acid chain; its full sequence is Protein sevenless (2554 aa).

Residues 1 to 10 show a composition bias toward polar residues; sequence MTMFWQQNVD. Residues 1–25 form a disordered region; the sequence is MTMFWQQNVDHQSDEQDKQAKGAAP. Residues 1-2123 lie on the Extracellular side of the membrane; the sequence is MTMFWQQNVD…AEPFVSPEKR (2123 aa). Basic and acidic residues predominate over residues 11–20; the sequence is HQSDEQDKQA. N-linked (GlcNAc...) asparagine glycosylation is present at Asn30. Positions 51–70 are enriched in low complexity; that stretch reads NQQAPGTSSSSSNSQNASPS. The disordered stretch occupies residues 51–75; the sequence is NQQAPGTSSSSSNSQNASPSKIVVR. Asn129 carries N-linked (GlcNAc...) asparagine glycosylation. The disordered stretch occupies residues 181–208; that stretch reads SRPQSTMAHHPDDRDRDRDPSEEQHGVD. Residues 189–208 show a composition bias toward basic and acidic residues; that stretch reads HHPDDRDRDRDPSEEQHGVD. In terms of domain architecture, Fibronectin type-III 1 spans 440-533; that stretch reads APVIEHLMGL…GFVQTHSARN (94 aa). N-linked (GlcNAc...) asparagine glycosylation is found at Asn481, Asn505, Asn617, and Asn647. The Fibronectin type-III 2 domain occupies 824–924; that stretch reads AGGKPHSLKA…EPLAARTWPL (101 aa). A glycan (N-linked (GlcNAc...) asparagine) is linked at Asn966. Residues 1010–1053 form an LDL-receptor class B repeat; it reads GRVYWTDLARNCVVRMDPWSGSRELLPVFEANFLALDPRQGHLY. 2 consecutive Fibronectin type-III domains span residues 1202-1290 and 1294-1397; these read LPDS…TPPV and QPRR…VAPE. N-linked (GlcNAc...) asparagine glycans are attached at residues Asn1228, Asn1313, Asn1353, Asn1550, Asn1557, Asn1639, Asn1725, Asn1756, Asn1804, Asn1889, Asn1947, and Asn2073. Fibronectin type-III domains lie at 1801 to 1901, 1902 to 1988, and 1995 to 2117; these read PPRN…SFAE, LPEL…VYET, and QPGK…AEPF. Residues 2124–2147 traverse the membrane as a helical segment; sequence GSLVLAIIAPAAIVSSCVLALVLV. Residues 2148 to 2554 lie on the Cytoplasmic side of the membrane; it reads RKVQKRRLRA…LYANEGVSRL (407 aa). A Protein kinase domain is found at 2209–2485; that stretch reads LKLLRFLGSG…RCYNTLHAIS (277 aa). ATP is bound by residues 2215–2223 and Lys2242; that span reads LGSGAFGEV. Asp2343 functions as the Proton acceptor in the catalytic mechanism. A Phosphotyrosine; by autocatalysis modification is found at Tyr2380. The segment covering 2515–2527 has biased composition (basic and acidic residues); the sequence is GQPLEEHREHNER. The interval 2515–2534 is disordered; the sequence is GQPLEEHREHNERPEDENLT.

The protein belongs to the protein kinase superfamily. Tyr protein kinase family. Insulin receptor subfamily. May form a complex with drk and Sos. Binds the phosphotyrosine interaction domain (PID) of Dab.

The protein resides in the cell membrane. It catalyses the reaction L-tyrosyl-[protein] + ATP = O-phospho-L-tyrosyl-[protein] + ADP + H(+). Functionally, receptor for an extracellular signal required to instruct a cell to differentiate into an R7 photoreceptor. The ligand for sev is the boss (bride of sevenless) protein on the surface of the neighboring R8 cell. This chain is Protein sevenless (sev), found in Drosophila melanogaster (Fruit fly).